A 424-amino-acid polypeptide reads, in one-letter code: Ribulose bisphosphate carboxylase (424 aa).

Lysine 159 serves as the catalytic Proton acceptor. Lysine 161 serves as a coordination point for substrate. Mg(2+)-binding residues include lysine 185, aspartate 187, and glutamate 188. At lysine 185 the chain carries N6-carboxylysine. The Proton acceptor role is filled by histidine 277. Substrate-binding positions include arginine 278, histidine 310, 347 to 349, and 369 to 372; these read SGG and QAGG.

Belongs to the RuBisCO large chain family. Type III subfamily. As to quaternary structure, homodimer or homodecamer. In contrast to form I RuBisCO, the form III RuBisCO is composed solely of large subunits. It depends on Mg(2+) as a cofactor.

The enzyme catalyses 2 (2R)-3-phosphoglycerate + 2 H(+) = D-ribulose 1,5-bisphosphate + CO2 + H2O. It catalyses the reaction D-ribulose 1,5-bisphosphate + O2 = 2-phosphoglycolate + (2R)-3-phosphoglycerate + 2 H(+). In terms of biological role, catalyzes the addition of molecular CO(2) and H(2)O to ribulose 1,5-bisphosphate (RuBP), generating two molecules of 3-phosphoglycerate (3-PGA). Functions in an archaeal AMP degradation pathway, together with AMP phosphorylase and R15P isomerase. In Pyrococcus abyssi (strain GE5 / Orsay), this protein is Ribulose bisphosphate carboxylase.